Consider the following 647-residue polypeptide: 1-deoxy-D-xylulose-5-phosphate synthase (647 aa).

Residues H88 and 129–131 each bind thiamine diphosphate; that span reads GHA. Residue D160 participates in Mg(2+) binding. Thiamine diphosphate-binding positions include 161–162, N189, Y300, and E377; that span reads GA. Residue N189 coordinates Mg(2+).

It belongs to the transketolase family. DXPS subfamily. As to quaternary structure, homodimer. Mg(2+) is required as a cofactor. The cofactor is thiamine diphosphate.

The enzyme catalyses D-glyceraldehyde 3-phosphate + pyruvate + H(+) = 1-deoxy-D-xylulose 5-phosphate + CO2. Its pathway is metabolic intermediate biosynthesis; 1-deoxy-D-xylulose 5-phosphate biosynthesis; 1-deoxy-D-xylulose 5-phosphate from D-glyceraldehyde 3-phosphate and pyruvate: step 1/1. In terms of biological role, catalyzes the acyloin condensation reaction between C atoms 2 and 3 of pyruvate and glyceraldehyde 3-phosphate to yield 1-deoxy-D-xylulose-5-phosphate (DXP). In Dehalococcoides mccartyi (strain CBDB1), this protein is 1-deoxy-D-xylulose-5-phosphate synthase.